The following is a 364-amino-acid chain: Glutamine synthetase (364 aa).

The GS beta-grasp domain occupies 15–94; that stretch reads VLAEYIWIDA…VLAECWNNDG (80 aa). The GS catalytic domain occupies 101 to 364; the sequence is HRHECAKLMS…ETKRGEEEGF (264 aa).

The protein belongs to the glutamine synthetase family. As to quaternary structure, homooctamer.

The protein localises to the cytoplasm. The catalysed reaction is L-glutamate + NH4(+) + ATP = L-glutamine + ADP + phosphate + H(+). This chain is Glutamine synthetase (GLN1), found in Yarrowia lipolytica (strain CLIB 122 / E 150) (Yeast).